The primary structure comprises 308 residues: MEFNQHITVLLNETIELLNIKPDGIYVDCTFGRGGHSQLILKKLSKKGKLICLDQDQEAINFANNLFKNNTNVIVIKTNFKNLKSALSAHKIFYVDGFIFDLGLSSPQLDDPKRGFSYHKNAWLDMRMDQSQNLNAHYIVNNYSFAKLVSIFKRYGEIKYPKIIADAIVKERSIKEINTTLELVEIIKKYSPKKNLFEKKHPARLFFQAIRIEVNDELNILEKAFNDAISMLNPLGVVAIISFHSLEDKIVKKVFNNYAKIKLPKEVPINNYVNKYSLLNQKIMPSTQELNDNNRSRSSILRGLIRNY.

Residues 34–36, Asp-54, Phe-80, Asp-101, and Gln-108 contribute to the S-adenosyl-L-methionine site; that span reads GGH.

Belongs to the methyltransferase superfamily. RsmH family.

Its subcellular location is the cytoplasm. The catalysed reaction is cytidine(1402) in 16S rRNA + S-adenosyl-L-methionine = N(4)-methylcytidine(1402) in 16S rRNA + S-adenosyl-L-homocysteine + H(+). In terms of biological role, specifically methylates the N4 position of cytidine in position 1402 (C1402) of 16S rRNA. This chain is Ribosomal RNA small subunit methyltransferase H, found in Ureaplasma parvum serovar 3 (strain ATCC 27815 / 27 / NCTC 11736).